The primary structure comprises 712 residues: MVDSDDDGDRRRDKFARERRDEDYRRGGGGFNRYDNKRPGGRRDDYQVKRSRGDDADDSFDPVSRSGNGSDLPTESDSIYSGPLQTFKKFLTSQEDDISEEDAIKKYNEYKTEHRKHQLERFFRAHKDEEWFRLKYKPDDAKKLREAHLENVQKRLQVFNELKEQGQFNKFSLDFGDAEAIIRMLDSVVVKLENGTEDELKAVLAQKLEDESLADIKKDENGNGTEQPKEEPEVKQESGATEELEEGAIEDGTEKSSNKVNIHRTCSVFLRNIPPGLTYEELEGLCKKSPGFLRLALTDGIAERKFYRRGWATFKRDINIKEICWALNAHRLRETDLNAIINRDITRRVRTNNGIASHKQVAINDLKLAVKLTVLYDKKIGLFNAADEADADREMDIRMGVDLVAASTNPLIKEVKSLVPHDVLNDISEEEAELLGVSNGGEAPAEKIRFERDDNILKALDLLIVYLRIVHSIDFYNHGHYAQEDSMPNRCGLIHVRGQPPSGVSITTDEDGALVVPQKFVNDFISGFNSRIEKGLIEKQYVSEEELEKMGKKDGEKEVEAFIQKNTVELAKDKWLCPLSGKKFKGPEFIRKHLQSKHEDKLEEARAEADFFNNYLADAQRPVDCEPKQAPRDDHRGGGGGERGGYGRERDDDRGPGGGGRNSFGGGGYDRRPQFPPRHSLGGRGGGGRYFEDAPRRQPVSYRDLDAPDDIP.

Disordered regions lie at residues 1-80, 214-256, and 620-712; these read MVDS…DSIY, ADIK…TEKS, and QRPV…DDIP. 2 stretches are compositionally biased toward basic and acidic residues: residues 8-26 and 34-54; these read GDRR…DYRR and YDNK…SRGD. The span at 65–79 shows a compositional bias: polar residues; the sequence is RSGNGSDLPTESDSI. Positions 214–236 are enriched in basic and acidic residues; sequence ADIKKDENGNGTEQPKEEPEVKQ. Acidic residues predominate over residues 240–251; that stretch reads ATEELEEGAIED. Composition is skewed to basic and acidic residues over residues 621–637 and 645–655; these read RPVD…DHRG and GYGRERDDDRG. The span at 656–668 shows a compositional bias: gly residues; that stretch reads PGGGGRNSFGGGG.

The protein belongs to the ARS2 family.

The protein resides in the nucleus. In terms of biological role, acts as a mediator between the cap-binding complex (CBC) and the primary microRNAs (miRNAs) processing machinery. Contributes to the stability and delivery of capped primary miRNA transcripts to the primary miRNA processing complex, thereby playing a role in RNA-mediated gene silencing (RNAi) by miRNAs. The chain is Serrate RNA effector molecule homolog from Caenorhabditis elegans.